Reading from the N-terminus, the 449-residue chain is Hyaluronidase-1 (449 aa).

The signal sequence occupies residues 1 to 23 (MYHLWIKCLAAWIFLKRCNGVHA). 2 disulfides stabilise this stretch: C47-C340 and C211-C227. 3 N-linked (GlcNAc...) asparagine glycosylation sites follow: N67, N103, and N111. E135 functions as the Proton donor in the catalytic mechanism. N153 carries N-linked (GlcNAc...) asparagine glycosylation. Residue N357 is glycosylated (N-linked (GlcNAc...) asparagine). 3 disulfide bridges follow: C365–C376, C370–C427, and C429–C438. The N-linked (GlcNAc...) asparagine glycan is linked to N401. One can recognise an EGF-like domain in the interval 427–438 (CQCYQGWKGLYC).

Belongs to the glycosyl hydrolase 56 family. In terms of assembly, monomer. In terms of tissue distribution, expressed by the venom gland.

It localises to the secreted. It catalyses the reaction Random hydrolysis of (1-&gt;4)-linkages between N-acetyl-beta-D-glucosamine and D-glucuronate residues in hyaluronate.. Its function is as follows. Snake venom endo-hyaluronidase that degrades hyaluronan to smaller oligosaccharide fragments. In venom, it is not toxic by itself, but increases the diffusion of other venom proteins by degrading the extracellular matrix. In addition, it displays antiedematogenic activity. The protein is Hyaluronidase-1 of Bitis arietans (African puff adder).